The following is a 295-amino-acid chain: Cytidine deaminase (295 aa).

CMP/dCMP-type deaminase domains are found at residues 48-168 and 187-295; these read TDNQ…FGPS and EDDD…YLSL. Position 89-91 (89-91) interacts with substrate; sequence NME. H102 contacts Zn(2+). Catalysis depends on E104, which acts as the Proton donor. Zn(2+) contacts are provided by C129 and C132.

This sequence belongs to the cytidine and deoxycytidylate deaminase family. Homodimer. Zn(2+) serves as cofactor.

The enzyme catalyses cytidine + H2O + H(+) = uridine + NH4(+). The catalysed reaction is 2'-deoxycytidine + H2O + H(+) = 2'-deoxyuridine + NH4(+). Functionally, this enzyme scavenges exogenous and endogenous cytidine and 2'-deoxycytidine for UMP synthesis. In Vibrio vulnificus (strain CMCP6), this protein is Cytidine deaminase.